Reading from the N-terminus, the 890-residue chain is MRKLFEKVFGTYSEREIKKLDKTVDQIEALEAAYSKLTDAELKDKTRQFKERLAKGETLDDILPEAFATIREGAWRTLGMKHYRVQLYGGMVLHQGRIAEMRTGEGKTLMATLPVYLNALSGKGVHVVTVNDYLAKRDQEWMSKVYNFLGLTVGVIVHGITNEDRRKAYHCDITYGTNNEFGFDYLRDNMVIHLHEMVQRPLNYAIVDEVDSILIDEARTPLIISGQGDKSTKMYFIVDQFVKTLKKEVDFEVDEKANSVTLTEEGVERAEKYFAVDNLSDMENTELAHHINQALKANNLMKLDKDYVVKDGEIIIVDDFTGRLMFGRRYSEGLHQAIEAKEGLEVQRESKTLATITFQNYFRMYDKLSGMTGTAKTEEDEFISIYNMDVVEIPTNKPVVRIDEPDSVYKSEKGKVLSIIKDIEEKHKKGQPVLVGTISIEKSEELAAALKKKGIPHEVLNAKQHEREAEIIAQAGRKGIVTIATNMAGRGTDILLGGNPEFLAKREMKRMGYGDEIISMVTSHAETDNEELISARGKYEELYKRFKAETDREHEEVKAVGGLHIIGTERHESRRIDNQLRGRAGRQGDPGSSRFYISLEDDLMRLFGGERMLGIVDKMGLAEDEAIEHRLLTNSIENAQKKVEGRNFGIRKHVLQYDDVMNKQREVIYGERKKVLEGENMRDHIFSLMANIVDESIPMYTSEATSTPEIDTEGLRNHLSKIFLKADFGFINGQNKDVESLKSQIVAAAEKAYAVKEEEIGSERMREIERVILLQVIDTKWMDHIDAMDQLRQGIGLRAIGQVDPVRAYQLEGYDMFQEMINSIQEDTVRFLFSIEKEAVVERKQVAKPIEASHGDGDAKKAPVVKKEESGRNDLCPCGSGKKYKKCCGK.

Residues glutamine 86, 104–108 (GEGKT), and aspartate 493 contribute to the ATP site. Positions 851–872 (EASHGDGDAKKAPVVKKEESGR) are enriched in basic and acidic residues. Residues 851–873 (EASHGDGDAKKAPVVKKEESGRN) are disordered. Zn(2+)-binding residues include cysteine 876, cysteine 878, cysteine 887, and cysteine 888.

This sequence belongs to the SecA family. In terms of assembly, monomer and homodimer. Part of the essential Sec protein translocation apparatus which comprises SecA, SecYEG and auxiliary proteins SecDF. Other proteins may also be involved. Zn(2+) serves as cofactor.

The protein resides in the cell membrane. It is found in the cytoplasm. The enzyme catalyses ATP + H2O + cellular proteinSide 1 = ADP + phosphate + cellular proteinSide 2.. In terms of biological role, part of the Sec protein translocase complex. Interacts with the SecYEG preprotein conducting channel. Has a central role in coupling the hydrolysis of ATP to the transfer of proteins into and across the cell membrane, serving as an ATP-driven molecular motor driving the stepwise translocation of polypeptide chains across the membrane. This Alkaliphilus oremlandii (strain OhILAs) (Clostridium oremlandii (strain OhILAs)) protein is Protein translocase subunit SecA.